Reading from the N-terminus, the 185-residue chain is NOP protein chaperone 1 (185 aa).

The tract at residues 1-40 (MEVHGKPKASPSCSSPTRDSSGVPVSKELLTAGSDGRGGI) is disordered. Residues 10–21 (SPSCSSPTRDSS) are compositionally biased toward low complexity. 2 positions are modified to phosphoserine: Ser34 and Ser66. Residues 118-185 (FEMNQSDSKE…LDSPASKKKK (68 aa)) form a disordered region. The span at 143–152 (SESEDEDDSI) shows a compositional bias: acidic residues. A Phosphoserine modification is found at Ser178.

As to quaternary structure, interacts with NOP58, RUVBL1 and RUVBL2; the interactions are direct and NOPCHAP1 bridges the association of NOP58 with RUVBL1:RUVBL2 even in absence of snoRNAs. The interactions with RUVBL1 and RUVBL2 are disrupted upon ATP binding.

It is found in the nucleus. Its function is as follows. Client-loading PAQosome/R2TP complex cofactor that selects NOP58 to promote box C/D small nucleolar ribonucleoprotein (snoRNP) assembly. Acts as a bridge between NOP58 and the R2TP complex via RUVBL1:RUVBL2. The protein is NOP protein chaperone 1 of Homo sapiens (Human).